A 515-amino-acid chain; its full sequence is Pescadillo homolog (515 aa).

The stretch at 270–327 forms a coiled coil; that stretch reads EVLAALNHTLKIIQTQEEDLEVDEFPIDPNSEDAEAIQAQKEEETKLERLKNLFSECK. A BRCT domain is found at 318–411; the sequence is RLKNLFSECK…KLLPVEEYFP (94 aa). The interval 477-515 is disordered; the sequence is RLYEKIMHSKKKKRSEVRKLESKRKVHDEEKAKKKLKSS. Positions 484–501 are enriched in basic residues; the sequence is HSKKKKRSEVRKLESKRK.

Belongs to the pescadillo family.

The protein localises to the nucleus. The protein resides in the nucleolus. It is found in the nucleoplasm. In terms of biological role, required for maturation of ribosomal RNAs and formation of the large ribosomal subunit. The sequence is that of Pescadillo homolog from Nematostella vectensis (Starlet sea anemone).